The primary structure comprises 473 residues: MSEGTLYDKVWDRHTVTKLPTGQDQLFVGLHLVHEVTSPQAFGMLKERDQEVAFPERTHATVDHIVPTGNRDRPYRDEAAENMMAELEANVRGSGIDFSDPDSGNQGIVHVIGPEQGLTQPGMTIVCGDSHTSTHGAFGALAFGIGTSQIRDVLATGCIAMEKQQVRKIEVTGELGEGVTAKDVILTIIGKLGTDGGVGYVYEYAGEAIEDLGMEGRMSICNMSIEGGARAGYVNPDETTYEWLAETDAFADDPEKFERLKPYWESIRSDADAEYDDVVTIDGSAIEPTVTWGTTPGQTAGITEPIPDPDDLPEEDRDTAKRAQKHMRVEPGDTMEGYDIDVAFLGSCTNARLKDLREAAAFVEGREVDDDVRAMVVPGSQRVRDAAEAEGIDEIFIEAGFDWREPGCSMCLGMNDDQLVGDEASASSSNRNFVGRQGSKDGRTVLMSPIMVAAAAVTGEVTDVREMEEVATV.

The segment at 289–319 (TVTWGTTPGQTAGITEPIPDPDDLPEEDRDT) is disordered. Positions 291 to 301 (TWGTTPGQTAG) are enriched in polar residues. Acidic residues predominate over residues 307 to 317 (PDPDDLPEEDR). [4Fe-4S] cluster is bound by residues Cys348, Cys408, and Cys411.

Belongs to the aconitase/IPM isomerase family. LeuC type 1 subfamily. In terms of assembly, heterodimer of LeuC and LeuD. [4Fe-4S] cluster is required as a cofactor.

It carries out the reaction (2R,3S)-3-isopropylmalate = (2S)-2-isopropylmalate. Its pathway is amino-acid biosynthesis; L-leucine biosynthesis; L-leucine from 3-methyl-2-oxobutanoate: step 2/4. Catalyzes the isomerization between 2-isopropylmalate and 3-isopropylmalate, via the formation of 2-isopropylmaleate. In Halorubrum lacusprofundi (strain ATCC 49239 / DSM 5036 / JCM 8891 / ACAM 34), this protein is 3-isopropylmalate dehydratase large subunit.